The sequence spans 201 residues: Peptidyl-tRNA hydrolase (201 aa).

Tyr-15 contributes to the tRNA binding site. The Proton acceptor role is filled by His-20. 3 residues coordinate tRNA: Tyr-66, Asn-68, and Asn-114.

It belongs to the PTH family. Monomer.

The protein resides in the cytoplasm. It carries out the reaction an N-acyl-L-alpha-aminoacyl-tRNA + H2O = an N-acyl-L-amino acid + a tRNA + H(+). Hydrolyzes ribosome-free peptidyl-tRNAs (with 1 or more amino acids incorporated), which drop off the ribosome during protein synthesis, or as a result of ribosome stalling. Its function is as follows. Catalyzes the release of premature peptidyl moieties from peptidyl-tRNA molecules trapped in stalled 50S ribosomal subunits, and thus maintains levels of free tRNAs and 50S ribosomes. The chain is Peptidyl-tRNA hydrolase from Burkholderia mallei (strain NCTC 10247).